The primary structure comprises 238 residues: ATP synthase subunit a (238 aa).

Transmembrane regions (helical) follow at residues 15–35 (IFNL…FVFI), 76–96 (YSLF…LGLM), 111–131 (PTAN…LTHI), 167–187 (LALR…LLLL), and 208–230 (AFSV…VYLG).

Belongs to the ATPase A chain family. As to quaternary structure, F-type ATPases have 2 components, CF(1) - the catalytic core - and CF(0) - the membrane proton channel. CF(1) has five subunits: alpha(3), beta(3), gamma(1), delta(1), epsilon(1). CF(0) has three main subunits: a(1), b(2) and c(9-12). The alpha and beta chains form an alternating ring which encloses part of the gamma chain. CF(1) is attached to CF(0) by a central stalk formed by the gamma and epsilon chains, while a peripheral stalk is formed by the delta and b chains.

It is found in the cell membrane. In terms of biological role, key component of the proton channel; it plays a direct role in the translocation of protons across the membrane. This is ATP synthase subunit a from Streptococcus pneumoniae (strain 70585).